Reading from the N-terminus, the 194-residue chain is MALRGPAKTVAQTVSVVIFMGALAWASVPLYDWFCRVTGFGGVTGVSDVAPEDILDQTITIRFDGSLNNHMPWEFKPVVREMDVRIGESGLAFYEAYNPTDRPVAGSASYNVTPYQAGGFFNKIQCFCFEEQVLQPGERVQMPVTFYVDPEIVDDRDGKHVHTITLSYTFYEIDLPEEYADAQDIEENSDTSLN.

Residues 1–12 (MALRGPAKTVAQ) are Cytoplasmic-facing. A helical; Signal-anchor for type II membrane protein transmembrane segment spans residues 13-35 (TVSVVIFMGALAWASVPLYDWFC). Over 36–194 (RVTGFGGVTG…IEENSDTSLN (159 aa)) the chain is Periplasmic.

Belongs to the COX11/CtaG family.

It localises to the cell inner membrane. In terms of biological role, exerts its effect at some terminal stage of cytochrome c oxidase synthesis, probably by being involved in the insertion of the copper B into subunit I. This Roseobacter denitrificans (strain ATCC 33942 / OCh 114) (Erythrobacter sp. (strain OCh 114)) protein is Cytochrome c oxidase assembly protein CtaG.